We begin with the raw amino-acid sequence, 512 residues long: 2,3-bisphosphoglycerate-independent phosphoglycerate mutase (512 aa).

Positions 18 and 68 each coordinate Mn(2+). Ser68 (phosphoserine intermediate) is an active-site residue. Residues His129, 159–160, Arg191, Arg197, 265–268, and Lys338 each bind substrate; these read RD and RPDR. 5 residues coordinate Mn(2+): Asp403, His407, Asp444, His445, and His462.

This sequence belongs to the BPG-independent phosphoglycerate mutase family. Monomer. Mn(2+) serves as cofactor.

The enzyme catalyses (2R)-2-phosphoglycerate = (2R)-3-phosphoglycerate. It participates in carbohydrate degradation; glycolysis; pyruvate from D-glyceraldehyde 3-phosphate: step 3/5. Catalyzes the interconversion of 2-phosphoglycerate and 3-phosphoglycerate. The polypeptide is 2,3-bisphosphoglycerate-independent phosphoglycerate mutase (Mesomycoplasma hyopneumoniae (strain 232) (Mycoplasma hyopneumoniae)).